Here is a 215-residue protein sequence, read N- to C-terminus: Pyridoxine/pyridoxamine 5'-phosphate oxidase (215 aa).

Substrate-binding positions include 9–12 and Lys69; that span reads RRDY. Residues 64 to 69, 79 to 80, Lys86, and Gln108 contribute to the FMN site; these read RVLLLK and FT. Substrate is bound by residues Tyr126, Arg130, and Ser134. Residues 143 to 144 and Trp188 each bind FMN; that span reads QS. 194–196 is a substrate binding site; the sequence is RLH. Arg198 is an FMN binding site.

It belongs to the pyridoxamine 5'-phosphate oxidase family. As to quaternary structure, homodimer. Requires FMN as cofactor.

The enzyme catalyses pyridoxamine 5'-phosphate + O2 + H2O = pyridoxal 5'-phosphate + H2O2 + NH4(+). The catalysed reaction is pyridoxine 5'-phosphate + O2 = pyridoxal 5'-phosphate + H2O2. It participates in cofactor metabolism; pyridoxal 5'-phosphate salvage; pyridoxal 5'-phosphate from pyridoxamine 5'-phosphate: step 1/1. It functions in the pathway cofactor metabolism; pyridoxal 5'-phosphate salvage; pyridoxal 5'-phosphate from pyridoxine 5'-phosphate: step 1/1. Functionally, catalyzes the oxidation of either pyridoxine 5'-phosphate (PNP) or pyridoxamine 5'-phosphate (PMP) into pyridoxal 5'-phosphate (PLP). This Pseudomonas syringae pv. syringae (strain B728a) protein is Pyridoxine/pyridoxamine 5'-phosphate oxidase.